The sequence spans 830 residues: Beta-glucosidase A (830 aa).

Asp769 is an active-site residue.

The protein belongs to the glycosyl hydrolase 3 family.

It catalyses the reaction Hydrolysis of terminal, non-reducing beta-D-glucosyl residues with release of beta-D-glucose.. In terms of biological role, b.fibrisolvens beta-glucosidase hydrolyzes cellobiose to a limited extent, cellotriose to cellobiose and glucose, and cellotetraose and cellopentaose to predominantly glucose. The protein is Beta-glucosidase A (bglA) of Butyrivibrio fibrisolvens.